We begin with the raw amino-acid sequence, 189 residues long: Parkinson disease protein 7 homolog (189 aa).

A2 is modified (N-acetylalanine). S-palmitoyl cysteine attachment occurs at residues C46 and C53. Phosphotyrosine is present on Y67. C106 acts as the Nucleophile in catalysis. C106 is modified (cysteine sulfinic acid (-SO2H); alternate). A lipid anchor (S-palmitoyl cysteine; alternate) is attached at C106. The active site involves H126. A Glycyl lysine isopeptide (Lys-Gly) (interchain with G-Cter in SUMO) cross-link involves residue K130. K148 bears the N6-acetyllysine mark. At K182 the chain carries N6-succinyllysine.

It belongs to the peptidase C56 family. Homodimer. Binds EFCAB6/DJBP and PIAS2. Part of a ternary complex containing PARK7, EFCAB6/DJBP and AR. Binds to HIPK1. Interacts (via N-terminus) with OTUD7B. Interacts with BBS1, CLCF1 and MTERF. Interacts (via C-terminus) with NCF1; the interaction is enhanced by LPS and modulates NCF1 phosphorylation and membrane translocation. Interacts with NENF. The cofactor is Deglycase activity does not require glutathione as a cofactor, however, glycated glutathione constitutes a PARK7 substrate.. In terms of processing, sumoylated on Lys-130 by PIAS2 or PIAS4; which is essential for cell-growth promoting activity and transforming activity. Post-translationally, undergoes cleavage of a C-terminal peptide and subsequent activation of protease activity in response to oxidative stress. As to expression, expressed in erythroblasts and in mature red blood cells from peripheral blood (at protein level). In pancreas, expression is higher in islets than surrounding exocrine tissues.

The protein resides in the cell membrane. The protein localises to the cytoplasm. It localises to the membrane raft. Its subcellular location is the nucleus. It is found in the mitochondrion. The protein resides in the endoplasmic reticulum. It catalyses the reaction N(omega)-(1-hydroxy-2-oxopropyl)-L-arginyl-[protein] + H2O = lactate + L-arginyl-[protein] + H(+). The enzyme catalyses N(6)-(1-hydroxy-2-oxopropyl)-L-lysyl-[protein] + H2O = lactate + L-lysyl-[protein] + H(+). It carries out the reaction S-(1-hydroxy-2-oxopropyl)-L-cysteinyl-[protein] + H2O = lactate + L-cysteinyl-[protein] + H(+). The catalysed reaction is N(omega)-(1-hydroxy-2-oxoethyl)-L-arginyl-[protein] + H2O = L-arginyl-[protein] + glycolate + H(+). It catalyses the reaction N(6)-(1-hydroxy-2-oxoethyl)-L-lysyl-[protein] + H2O = glycolate + L-lysyl-[protein] + H(+). The enzyme catalyses S-(1-hydroxy-2-oxoethyl)-L-cysteinyl-[protein] + H2O = glycolate + L-cysteinyl-[protein] + H(+). It carries out the reaction N(2)-(1-hydroxy-2-oxopropyl)-dGTP + H2O = lactate + dGTP + H(+). The catalysed reaction is N(2)-(1-hydroxy-2-oxopropyl)-GTP + H2O = lactate + GTP + H(+). It catalyses the reaction N(2)-(1-hydroxy-2-oxopropyl)-GDP + H2O = lactate + GDP + H(+). The enzyme catalyses N(2)-(1-hydroxy-2-oxopropyl)-GMP + H2O = lactate + GMP + H(+). It carries out the reaction N(2)-(1-hydroxy-2-oxoethyl)-dGTP + H2O = dGTP + glycolate + H(+). The catalysed reaction is N(2)-(1-hydroxy-2-oxoethyl)-GTP + H2O = glycolate + GTP + H(+). It catalyses the reaction N(2)-(1-hydroxy-2-oxoethyl)-GDP + H2O = glycolate + GDP + H(+). The enzyme catalyses N(2)-(1-hydroxy-2-oxoethyl)-GMP + H2O = glycolate + GMP + H(+). It carries out the reaction an N(2)-(1-hydroxy-2-oxopropyl)-guanosine in RNA + H2O = a guanosine in RNA + lactate + H(+). The catalysed reaction is an N(2)-(1-hydroxy-2-oxopropyl)-2'-deoxyguanosine in DNA + H2O = a 2'-deoxyguanosine in DNA + lactate + H(+). It catalyses the reaction an N(2)-(1-hydroxy-2-oxoethyl)-guanosine in RNA + H2O = a guanosine in RNA + glycolate + H(+). The enzyme catalyses an N(2)-(1-hydroxy-2-oxoethyl)-2'-deoxyguanosine in DNA + H2O = a 2'-deoxyguanosine in DNA + glycolate + H(+). Its function is as follows. Multifunctional protein with controversial molecular function which plays an important role in cell protection against oxidative stress and cell death acting as oxidative stress sensor and redox-sensitive chaperone and protease. It is involved in neuroprotective mechanisms like the stabilization of NFE2L2 and PINK1 proteins, male fertility as a positive regulator of androgen signaling pathway as well as cell growth and transformation through, for instance, the modulation of NF-kappa-B signaling pathway. Has been described as a protein and nucleotide deglycase that catalyzes the deglycation of the Maillard adducts formed between amino groups of proteins or nucleotides and reactive carbonyl groups of glyoxals. But this function is rebuted by other works. As a protein deglycase, repairs methylglyoxal- and glyoxal-glycated proteins, and releases repaired proteins and lactate or glycolate, respectively. Deglycates cysteine, arginine and lysine residues in proteins, and thus reactivates these proteins by reversing glycation by glyoxals. Acts on early glycation intermediates (hemithioacetals and aminocarbinols), preventing the formation of advanced glycation endproducts (AGE) that cause irreversible damage. Also functions as a nucleotide deglycase able to repair glycated guanine in the free nucleotide pool (GTP, GDP, GMP, dGTP) and in DNA and RNA. Is thus involved in a major nucleotide repair system named guanine glycation repair (GG repair), dedicated to reversing methylglyoxal and glyoxal damage via nucleotide sanitization and direct nucleic acid repair. Protects histones from adduction by methylglyoxal, controls the levels of methylglyoxal-derived argininine modifications on chromatin. Able to remove the glycations and restore histone 3, histone glycation disrupts both local and global chromatin architecture by altering histone-DNA interactions as well as histone acetylation and ubiquitination levels. Displays a very low glyoxalase activity that may reflect its deglycase activity. Eliminates hydrogen peroxide and protects cells against hydrogen peroxide-induced cell death. Required for correct mitochondrial morphology and function as well as for autophagy of dysfunctional mitochondria. Plays a role in regulating expression or stability of the mitochondrial uncoupling proteins SLC25A14 and SLC25A27 in dopaminergic neurons of the substantia nigra pars compacta and attenuates the oxidative stress induced by calcium entry into the neurons via L-type channels during pacemaking. Regulates astrocyte inflammatory responses, may modulate lipid rafts-dependent endocytosis in astrocytes and neuronal cells. In pancreatic islets, involved in the maintenance of mitochondrial reactive oxygen species (ROS) levels and glucose homeostasis in an age- and diet dependent manner. Protects pancreatic beta cells from cell death induced by inflammatory and cytotoxic setting. Binds to a number of mRNAs containing multiple copies of GG or CC motifs and partially inhibits their translation but dissociates following oxidative stress. Metal-binding protein able to bind copper as well as toxic mercury ions, enhances the cell protection mechanism against induced metal toxicity. In macrophages, interacts with the NADPH oxidase subunit NCF1 to direct NADPH oxidase-dependent ROS production, and protects against sepsis. The sequence is that of Parkinson disease protein 7 homolog from Mus musculus (Mouse).